Reading from the N-terminus, the 65-residue chain is Large ribosomal subunit protein bL33c (65 aa).

Belongs to the bacterial ribosomal protein bL33 family.

It is found in the plastid. It localises to the chloroplast. This Chara vulgaris (Common stonewort) protein is Large ribosomal subunit protein bL33c.